A 731-amino-acid chain; its full sequence is Beta-galactosidase (731 aa).

The signal sequence occupies residues 1–23 (MGVGIQTMWSILLLFSCIFSAAS). The active-site Proton donor is Glu182. Glu251 serves as the catalytic Nucleophile. Asn459 carries N-linked (GlcNAc...) asparagine glycosylation.

The protein belongs to the glycosyl hydrolase 35 family.

The protein resides in the secreted. It is found in the extracellular space. It localises to the apoplast. The catalysed reaction is Hydrolysis of terminal non-reducing beta-D-galactose residues in beta-D-galactosides.. Involved in cell wall degradation. Degrades polysaccharides containing beta-(1--&gt;4)-linked galactans, acting as an exo-(1--&gt;4)-beta-D-galactanase. The polypeptide is Beta-galactosidase (Malus domestica (Apple)).